The chain runs to 95 residues: Antitoxin VapB (95 aa).

Antitoxin component of a type II toxin-antitoxin (TA) system. Partially neutralizes the RNase activity of cognate toxin VapC. This chain is Antitoxin VapB, found in Rickettsia bellii (strain RML369-C).